Reading from the N-terminus, the 158-residue chain is Transcriptional repressor NrdR (158 aa).

The tract at residues 1–20 is disordered; it reads MRCPSCGSLDTQVKDSRPTE. Residues 3–34 fold into a zinc finger; that stretch reads CPSCGSLDTQVKDSRPTEDSSVIRRRRVCLTC. The ATP-cone domain occupies 49–139; that stretch reads LTVIKRNGRR…VYRNFREAKD (91 aa).

It belongs to the NrdR family. The cofactor is Zn(2+).

Functionally, negatively regulates transcription of bacterial ribonucleotide reductase nrd genes and operons by binding to NrdR-boxes. In Afipia carboxidovorans (strain ATCC 49405 / DSM 1227 / KCTC 32145 / OM5) (Oligotropha carboxidovorans), this protein is Transcriptional repressor NrdR.